The chain runs to 241 residues: Probable transcriptional regulatory protein RSc2190 (241 aa).

The protein belongs to the TACO1 family.

It localises to the cytoplasm. The chain is Probable transcriptional regulatory protein RSc2190 from Ralstonia nicotianae (strain ATCC BAA-1114 / GMI1000) (Ralstonia solanacearum).